The sequence spans 25 residues: Large ribosomal subunit protein uL29 (25 aa).

This sequence belongs to the universal ribosomal protein uL29 family.

This Brevundimonas vesicularis (Pseudomonas vesicularis) protein is Large ribosomal subunit protein uL29 (rpmC).